The sequence spans 261 residues: tRNA pseudouridine synthase A (261 aa).

D51 (nucleophile) is an active-site residue. Position 109 (Y109) interacts with substrate.

The protein belongs to the tRNA pseudouridine synthase TruA family. Homodimer.

It carries out the reaction uridine(38/39/40) in tRNA = pseudouridine(38/39/40) in tRNA. Formation of pseudouridine at positions 38, 39 and 40 in the anticodon stem and loop of transfer RNAs. In Shewanella pealeana (strain ATCC 700345 / ANG-SQ1), this protein is tRNA pseudouridine synthase A.